Consider the following 229-residue polypeptide: 3,4-dihydroxy-2-butanone 4-phosphate synthase (229 aa).

D-ribulose 5-phosphate is bound by residues Arg-28–Glu-29, Asp-33, Arg-164–Thr-168, and Glu-188. Mg(2+) is bound at residue Glu-29. His-167 serves as a coordination point for Mg(2+).

The protein belongs to the DHBP synthase family. As to quaternary structure, homodimer. The cofactor is Mg(2+). It depends on Mn(2+) as a cofactor.

It catalyses the reaction D-ribulose 5-phosphate = (2S)-2-hydroxy-3-oxobutyl phosphate + formate + H(+). It functions in the pathway cofactor biosynthesis; riboflavin biosynthesis; 2-hydroxy-3-oxobutyl phosphate from D-ribulose 5-phosphate: step 1/1. In terms of biological role, catalyzes the conversion of D-ribulose 5-phosphate to formate and 3,4-dihydroxy-2-butanone 4-phosphate. The polypeptide is 3,4-dihydroxy-2-butanone 4-phosphate synthase (Methanothermobacter thermautotrophicus (strain ATCC 29096 / DSM 1053 / JCM 10044 / NBRC 100330 / Delta H) (Methanobacterium thermoautotrophicum)).